The chain runs to 307 residues: 4-diphosphocytidyl-2-C-methyl-D-erythritol kinase (307 aa).

K9 is a catalytic residue. ATP is bound at residue 94–104 (PIGAGLAGGSS). The active site involves D136.

It belongs to the GHMP kinase family. IspE subfamily.

The enzyme catalyses 4-CDP-2-C-methyl-D-erythritol + ATP = 4-CDP-2-C-methyl-D-erythritol 2-phosphate + ADP + H(+). It functions in the pathway isoprenoid biosynthesis; isopentenyl diphosphate biosynthesis via DXP pathway; isopentenyl diphosphate from 1-deoxy-D-xylulose 5-phosphate: step 3/6. In terms of biological role, catalyzes the phosphorylation of the position 2 hydroxy group of 4-diphosphocytidyl-2C-methyl-D-erythritol. The chain is 4-diphosphocytidyl-2-C-methyl-D-erythritol kinase from Synechococcus sp. (strain CC9902).